A 449-amino-acid chain; its full sequence is Monoacylglycerol lipase (449 aa).

Lysine 82 participates in a covalent cross-link: Glycyl lysine isopeptide (Lys-Gly) (interchain with G-Cter in ubiquitin). The 242-residue stretch at 151–392 folds into the AB hydrolase-1 domain; it reads PMLIILHGLT…LLLETSTGGH (242 aa). The GXSXG motif lies at 230-234; it reads GFSLG. Serine 232 functions as the Nucleophile in the catalytic mechanism. Active-site charge relay system residues include aspartate 364 and histidine 392.

The protein belongs to the AB hydrolase superfamily. AB hydrolase 4 family.

The enzyme catalyses Hydrolyzes glycerol monoesters of long-chain fatty acids.. It carries out the reaction 1-hexadecanoylglycerol + H2O = glycerol + hexadecanoate + H(+). The catalysed reaction is 1-octadecanoylglycerol + H2O = octadecanoate + glycerol + H(+). It catalyses the reaction 1-(9Z-octadecenoyl)-glycerol + H2O = glycerol + (9Z)-octadecenoate + H(+). Functionally, converts monoacylglycerides (MAG) to free fatty acids and glycerol. Has a preference for palmitoyl-MAG. Does not play a significant role in ethyl ester biosynthesis. Also possesses ester hydrolase and low but persistent TAG lipase activity. The polypeptide is Monoacylglycerol lipase (Saccharomyces cerevisiae (strain ATCC 204508 / S288c) (Baker's yeast)).